We begin with the raw amino-acid sequence, 415 residues long: Lipoyl synthase, mitochondrial (415 aa).

The transit peptide at 1–33 directs the protein to the mitochondrion; that stretch reads MAASTSHLRSLCSSTRSLSRSGVIVTPIACRGY. [4Fe-4S] cluster is bound by residues Cys132, Cys137, Cys143, Cys163, Cys167, Cys170, and Ser378. One can recognise a Radical SAM core domain in the interval 148–367; it reads DKSSATATIM…RQRALEMGFL (220 aa).

It belongs to the radical SAM superfamily. Lipoyl synthase family. Requires [4Fe-4S] cluster as cofactor.

The protein resides in the mitochondrion. The enzyme catalyses [[Fe-S] cluster scaffold protein carrying a second [4Fe-4S](2+) cluster] + N(6)-octanoyl-L-lysyl-[protein] + 2 oxidized [2Fe-2S]-[ferredoxin] + 2 S-adenosyl-L-methionine + 4 H(+) = [[Fe-S] cluster scaffold protein] + N(6)-[(R)-dihydrolipoyl]-L-lysyl-[protein] + 4 Fe(3+) + 2 hydrogen sulfide + 2 5'-deoxyadenosine + 2 L-methionine + 2 reduced [2Fe-2S]-[ferredoxin]. Its pathway is protein modification; protein lipoylation via endogenous pathway; protein N(6)-(lipoyl)lysine from octanoyl-[acyl-carrier-protein]: step 2/2. In terms of biological role, catalyzes the radical-mediated insertion of two sulfur atoms into the C-6 and C-8 positions of the octanoyl moiety bound to the lipoyl domains of lipoate-dependent enzymes, thereby converting the octanoylated domains into lipoylated derivatives. This is Lipoyl synthase, mitochondrial from Aspergillus clavatus (strain ATCC 1007 / CBS 513.65 / DSM 816 / NCTC 3887 / NRRL 1 / QM 1276 / 107).